Here is a 476-residue protein sequence, read N- to C-terminus: METPGASASSLLLPAASRPPRKREAGEAGAATSKQRVLDEEEYIEGLQTVIQRDFFPDVEKLQAQKEYLEAEENGDLERMRQIAIKFGSALGKMSREPPPPYVTPATFETPEVHAGTGVVGNKPRPRGRGLEDGEAGEEEEKEPLPSLDVFLSRYTSEDNASFQEIMEVAKERSRARHAWLYQAEEEFEKRQKDNLELPSAEHQAIESSQASVETWKYKAKNSLMYYPEGVPDEEQLFKKPRQVVHKNTRFLRDPFSQALSRCQLQQAAALNAQHKQGKVGPDGKELIPQESPRVGGFGFVATPSPAPGVNESPMMTWGEVENTPLRVEGSETPYVDRTPGPAFKILEPGRRERLGLKMANEAAAKNRAKKQEALRRVTENLASLTPKGLSPAMSPALQRLVSRTASKYTDRALRASYTPSPARSTHLKTPASGLQTPTSTPAPGSATRTPLTQDPASITDNLLQLPARRKASDFF.

An N-acetylmethionine modification is found at Met1. Residues 1 to 18 show a composition bias toward low complexity; that stretch reads METPGASASSLLLPAASR. 2 disordered regions span residues 1-36 and 91-148; these read METP…SKQR and LGKM…LPSL. Thr3 is modified (phosphothreonine). Acidic residues predominate over residues 133-142; it reads DGEAGEEEEK. Residue Lys142 forms a Glycyl lysine isopeptide (Lys-Gly) (interchain with G-Cter in SUMO2) linkage. Phosphoserine is present on Ser292. The residue at position 386 (Thr386) is a Phosphothreonine. A phosphoserine mark is found at Ser391 and Ser395. The disordered stretch occupies residues 413-465; that stretch reads ALRASYTPSPARSTHLKTPASGLQTPTSTPAPGSATRTPLTQDPASITDNLLQ. Positions 437–451 are enriched in low complexity; that stretch reads TPTSTPAPGSATRTP. A compositionally biased stretch (polar residues) spans 452–463; the sequence is LTQDPASITDNL.

This sequence belongs to the ESS2 family. Identified in the spliceosome C complex. Interacts with FRA10AC1. As to expression, highly expressed in heart, brain and skeletal muscle. Detected at low levels in placenta.

The protein resides in the nucleus. Functionally, may be involved in pre-mRNA splicing. The chain is Splicing factor ESS-2 homolog from Homo sapiens (Human).